Here is a 624-residue protein sequence, read N- to C-terminus: Nif-specific regulatory protein (624 aa).

A GAF domain is found at 29–171; it reads DLQQTLREVL…MVANLIGQTV (143 aa). Residues 203–431 enclose the Sigma-54 factor interaction domain; that stretch reads VVCTSPNMLE…LENCIERAAT (229 aa). ATP-binding positions include 231–238 and 294–303; these read GESGTGKE and ASGGTLFLDE. An inter-domain linker region spans residues 432-581; that stretch reads QSRDGIIRTE…PLDEPESGSL (150 aa). Residues Cys-445 and Cys-450 each contribute to the a divalent metal cation site. Disordered regions lie at residues 477–508 and 549–578; these read VNRV…EPAG and APAA…EPES. Positions 549–563 are enriched in low complexity; it reads APAAAAPAPTSVTNA. The tract at residues 582–624 is C-terminal DNA-binding domain; it reads RDRLLWAMERTGWVQAKAARLLGMTTRQVSYALRKYNIEIKRF. The H-T-H motif DNA-binding region spans 596-615; that stretch reads QAKAARLLGMTTRQVSYALR.

Interacts with sigma-54.

Functionally, required for activation of most nif operons, which are directly involved in nitrogen fixation. This Azospirillum lipoferum protein is Nif-specific regulatory protein (nifA).